The following is a 403-amino-acid chain: Dual-specificity RNA methyltransferase RlmN (403 aa).

The Proton acceptor role is filled by Glu126. Residues 132–375 (ETDRGTLCVS…VRTPRGRDIL (244 aa)) enclose the Radical SAM core domain. Cys139 and Cys378 are oxidised to a cystine. Residues Cys146, Cys150, and Cys153 each contribute to the [4Fe-4S] cluster site. Residues 204 to 205 (GE), Ser236, 258 to 260 (SLH), and Asn335 each bind S-adenosyl-L-methionine. The active-site S-methylcysteine intermediate is Cys378.

Belongs to the radical SAM superfamily. RlmN family. [4Fe-4S] cluster serves as cofactor.

It localises to the cytoplasm. The enzyme catalyses adenosine(2503) in 23S rRNA + 2 reduced [2Fe-2S]-[ferredoxin] + 2 S-adenosyl-L-methionine = 2-methyladenosine(2503) in 23S rRNA + 5'-deoxyadenosine + L-methionine + 2 oxidized [2Fe-2S]-[ferredoxin] + S-adenosyl-L-homocysteine. It carries out the reaction adenosine(37) in tRNA + 2 reduced [2Fe-2S]-[ferredoxin] + 2 S-adenosyl-L-methionine = 2-methyladenosine(37) in tRNA + 5'-deoxyadenosine + L-methionine + 2 oxidized [2Fe-2S]-[ferredoxin] + S-adenosyl-L-homocysteine. Functionally, specifically methylates position 2 of adenine 2503 in 23S rRNA and position 2 of adenine 37 in tRNAs. m2A2503 modification seems to play a crucial role in the proofreading step occurring at the peptidyl transferase center and thus would serve to optimize ribosomal fidelity. This is Dual-specificity RNA methyltransferase RlmN from Bradyrhizobium sp. (strain ORS 278).